The sequence spans 357 residues: 3-isopropylmalate dehydrogenase (357 aa).

76–89 (GPQWDTIDPALRPE) contributes to the NAD(+) binding site. Substrate is bound by residues R96, R106, R134, and D224. Mg(2+) is bound by residues D224, D248, and D252. 282–294 (GSAPDIAGQGVAN) lines the NAD(+) pocket.

The protein belongs to the isocitrate and isopropylmalate dehydrogenases family. LeuB type 1 subfamily. In terms of assembly, homodimer. Requires Mg(2+) as cofactor. Mn(2+) serves as cofactor.

The protein resides in the cytoplasm. It carries out the reaction (2R,3S)-3-isopropylmalate + NAD(+) = 4-methyl-2-oxopentanoate + CO2 + NADH. The protein operates within amino-acid biosynthesis; L-leucine biosynthesis; L-leucine from 3-methyl-2-oxobutanoate: step 3/4. Its function is as follows. Catalyzes the oxidation of 3-carboxy-2-hydroxy-4-methylpentanoate (3-isopropylmalate) to 3-carboxy-4-methyl-2-oxopentanoate. The product decarboxylates to 4-methyl-2 oxopentanoate. This is 3-isopropylmalate dehydrogenase from Xylella fastidiosa (strain 9a5c).